A 218-amino-acid chain; its full sequence is Cytochrome b6 (218 aa).

The helical transmembrane segment at 35-55 (IFYCLGGITLVCFLIQFATGF) threads the bilayer. Cysteine 38 lines the heme c pocket. The heme b site is built by histidine 89 and histidine 103. The next 3 helical transmembrane spans lie at 93 to 113 (ASMM…TGGF), 119 to 139 (LTWV…VTGY), and 189 to 209 (LHTF…FLMI). Positions 190 and 205 each coordinate heme b.

This sequence belongs to the cytochrome b family. PetB subfamily. As to quaternary structure, the 4 large subunits of the cytochrome b6-f complex are cytochrome b6, subunit IV (17 kDa polypeptide, PetD), cytochrome f and the Rieske protein, while the 4 small subunits are PetG, PetL, PetM and PetN. The complex functions as a dimer. The cofactor is heme b. Heme c serves as cofactor.

The protein resides in the cellular thylakoid membrane. Component of the cytochrome b6-f complex, which mediates electron transfer between photosystem II (PSII) and photosystem I (PSI), cyclic electron flow around PSI, and state transitions. The protein is Cytochrome b6 of Prochlorococcus marinus (strain MIT 9515).